We begin with the raw amino-acid sequence, 309 residues long: Serpentine receptor class gamma-47 (309 aa).

5 helical membrane-spanning segments follow: residues Ile-22 to Phe-42, Phe-140 to Leu-160, Ile-190 to Ile-210, Leu-230 to Ala-250, and Ile-272 to Ile-292.

This sequence belongs to the nematode receptor-like protein srg family.

It is found in the membrane. The protein is Serpentine receptor class gamma-47 (srg-47) of Caenorhabditis elegans.